Consider the following 417-residue polypeptide: Phosphoglycerate kinase 1 (417 aa).

Residue Ser2 is modified to N-acetylserine. Ser2 and Ser4 each carry phosphoserine. Position 6 is an N6-succinyllysine (Lys6). An N6-acetyllysine modification is found at Lys11. Residues Val23, Asp24, Phe25, Asn26, Gln38, and Arg39 each contribute to the (2R)-3-phosphoglycerate site. The mitochondrial targeting region exposed following cis-trans isomerization by PIN1 and recognized by the TOM complex for mitochondrial translocation of the protein stretch occupies residues 38–43 (QRIKAA). Lys48 is modified (N6-acetyllysine; alternate). Lys48 carries the post-translational modification N6-succinyllysine; alternate. The (2R)-3-phosphoglycerate site is built by Ser62, His63, Gly65, and Arg66. Lys75 carries the N6-acetyllysine modification. The residue at position 76 (Tyr76) is a Phosphotyrosine. Residues Lys86 and Lys91 each carry the N6-acetyllysine modification. N6-acetyllysine; alternate is present on Lys97. Residue Lys97 is modified to N6-(2-hydroxyisobutyryl)lysine; alternate. Residues Leu122 and Arg123 each contribute to the (2R)-3-phosphoglycerate site. An N6-acetyllysine; alternate modification is found at Lys131. Lys131 carries the N6-malonyllysine; alternate modification. Lys146 carries the N6-acetyllysine modification. Positions 170 and 171 each coordinate (2R)-3-phosphoglycerate. Lys191 is modified (N6-succinyllysine). Tyr196 carries the phosphotyrosine modification. Lys199 is modified (N6-acetyllysine). Ser203 carries the phosphoserine modification. Gly214 contributes to the ADP binding site. CDP is bound at residue Gly214. Residues Ala215 and Lys216 each coordinate AMP. Ala215 contacts ATP. Ala215 is a binding site for Mg(2+). N6-(2-hydroxyisobutyryl)lysine is present on Lys216. Positions 218 and 219 each coordinate Mg(2+). Residue Asp219 coordinates CDP. Position 220 (Lys220) interacts with AMP. Residue Lys220 participates in ATP binding. Lys220 carries the N6-(2-hydroxyisobutyryl)lysine modification. Gly238 contributes to the ADP binding site. Gly238 contacts CDP. Gly239 is an AMP binding site. Gly239 contributes to the ATP binding site. 2 positions are modified to N6-acetyllysine: Lys267 and Lys291. AMP is bound at residue Gly313. Gly313 provides a ligand contact to ATP. Lys323 carries the post-translational modification N6-(2-hydroxyisobutyryl)lysine. CDP is bound by residues Gly338, Val340, and Phe343. Phe343 is a binding site for ADP. Position 344 (Glu344) interacts with AMP. Glu344 is an ATP binding site. Lys361 is subject to N6-acetyllysine. Positions 375 and 376 each coordinate ATP. Asp375 is a Mg(2+) binding site.

Belongs to the phosphoglycerate kinase family. As to quaternary structure, monomer. Interacts with kinase MAPK1/ERK2; the interaction is direct, occurs under hypoxic conditions, and promotes its interaction with PIN1. Interacts with peptidyl-prolyl cis-trans isomerase PIN1; the interaction is direct, occurs under hypoxic conditions, and targets the protein to the mitochondrion by promoting interactions with the TOM complex. Interacts with mitochondrial circRNA mcPGK1 (via its 2nd stem-loop); the interaction is direct and targets the protein to the mitochondrion by promoting interactions with the TOM complex. Interacts with pyruvate dehydrogenase kinase PDK1; the interaction is direct, occurs under hypoxic conditions and leads to PDK1-mediated inhibition of pyruvate dehydrogenase complex activity. The cofactor is Mg(2+). In terms of processing, phosphorylated at Ser-203 by MAPK1/ERK2 under hypoxic conditions, which promotes its mitochondrial targeting. Testis, lung, brain, skeletal muscle, liver, intestine, and kidney (at protein level).

It is found in the cytoplasm. The protein localises to the cytosol. Its subcellular location is the mitochondrion matrix. It carries out the reaction (2R)-3-phosphoglycerate + ATP = (2R)-3-phospho-glyceroyl phosphate + ADP. It catalyses the reaction L-seryl-[protein] + ATP = O-phospho-L-seryl-[protein] + ADP + H(+). It functions in the pathway carbohydrate degradation; glycolysis; pyruvate from D-glyceraldehyde 3-phosphate: step 2/5. Its function is as follows. Catalyzes one of the two ATP producing reactions in the glycolytic pathway via the reversible conversion of 1,3-diphosphoglycerate to 3-phosphoglycerate. Both L- and D- forms of purine and pyrimidine nucleotides can be used as substrates, but the activity is much lower on pyrimidines. In addition to its role as a glycolytic enzyme, it seems that PGK-1 acts as a polymerase alpha cofactor protein (primer recognition protein). Acts as a protein kinase when localized to the mitochondrion where it phosphorylates pyruvate dehydrogenase kinase PDK1 to inhibit pyruvate dehydrogenase complex activity and suppress the formation of acetyl-coenzyme A from pyruvate, and consequently inhibit oxidative phosphorylation and promote glycolysis. May play a role in sperm motility. In Mus musculus (Mouse), this protein is Phosphoglycerate kinase 1 (Pgk1).